Here is a 61-residue protein sequence, read N- to C-terminus: Probable tautomerase SSP1389 (61 aa).

Catalysis depends on Pro-2, which acts as the Proton acceptor; via imino nitrogen.

This sequence belongs to the 4-oxalocrotonate tautomerase family.

In Staphylococcus saprophyticus subsp. saprophyticus (strain ATCC 15305 / DSM 20229 / NCIMB 8711 / NCTC 7292 / S-41), this protein is Probable tautomerase SSP1389.